The primary structure comprises 221 residues: MSKPSLELKGATFTLSVLHINSSDLNAVMAELDSKLAQAPQFFLGAPLVVNLSAIQDSNFNLRGLKELLLSRQLVIVGITGATTVLSNQAKTLGLAIVKAGKQTASPPPAPRQTKVLKQNIRSGQQVYAKNGDLIIFGAVGNGAEVIADGSIHIYGALRGKAMAGAAGDTTAVIIAHSLEAELVSIAGQYWLAENLQQHSSDKSGCIRLNGESLIVESLPL.

This sequence belongs to the MinC family. As to quaternary structure, interacts with MinD and FtsZ.

In terms of biological role, cell division inhibitor that blocks the formation of polar Z ring septums. Rapidly oscillates between the poles of the cell to destabilize FtsZ filaments that have formed before they mature into polar Z rings. Prevents FtsZ polymerization. In Shewanella oneidensis (strain ATCC 700550 / JCM 31522 / CIP 106686 / LMG 19005 / NCIMB 14063 / MR-1), this protein is Probable septum site-determining protein MinC.